Here is a 361-residue protein sequence, read N- to C-terminus: D-amino-acid oxidase (361 aa).

The first 22 residues, 1-22 (MSNTIVVVGAGVIGLTSALLLS), serve as a signal peptide directing secretion. The FAD site is built by alanine 10, isoleucine 13, lysine 34, histidine 35, alanine 45, serine 46, glycine 50, and asparagine 52. N-linked (GlcNAc...) asparagine glycans are attached at residues asparagine 193 and asparagine 222. (R)-lactate-binding residues include tyrosine 242, tyrosine 258, and arginine 305. Tyrosine 242, tyrosine 258, and arginine 305 together coordinate anthranilate. Residues arginine 305, serine 332, glycine 335, tyrosine 336, and glutamine 337 each coordinate FAD. The Microbody targeting signal signature appears at 359–361 (SKL).

This sequence belongs to the DAMOX/DASOX family. Requires FAD as cofactor. In terms of processing, the N-terminus is blocked.

Its subcellular location is the peroxisome matrix. The catalysed reaction is a D-alpha-amino acid + O2 + H2O = a 2-oxocarboxylate + H2O2 + NH4(+). Catalyzes the oxidative deamination of D-amino acids with broad substrate specificity. Enables the organism to utilize D-amino acids as a source of nutrients. This chain is D-amino-acid oxidase, found in Fusarium vanettenii (Neocosmospora pisi).